Reading from the N-terminus, the 425-residue chain is MKKLKETKISGISLPLYAFFVAVIIVVTLLGKLPLDMVGLTLLLVTLGHLLYFIGEKFPIMNSYLGGGSVFTLIGATLLSFFHIVPSNVIGAVSNFMGGKFGFLDFYIAALICGSILGMNRNLLVKASKKFIPIALITMVIGFFSVGLVGMLIGNGFADSVMYVSMPMMSGGMGAGITPLSQIYAAGLAHGNQAAIFSQLAPAVTFGNILAIIGALSIAKVFNKSKYNGHGTLVAATKEELAKPKIKLDAQQIGTGMLFAFALLMAGDILNKFFPNIHQYAFMIIIVFILKATNTVPKDLEESVVMFNQVIMTNLTHAVLAGIGLALIDLNTLASAFTWQFVVLCLTSVVVMGLASWFLARLFGLYPVETAIGAGMINNSMGGTGNIAVLSASDRMEMIAFAQMANRLCGAIVLIFGGILIRFFY.

The next 11 membrane-spanning stretches (helical) occupy residues 11-31, 35-55, 65-85, 96-116, 134-154, 196-216, 246-266, 269-289, 310-330, 339-359, and 401-421; these read GISLPLYAFFVAVIIVVTLLG, LDMVGLTLLLVTLGHLLYFIG, LGGGSVFTLIGATLLSFFHIV, FMGGKFGFLDFYIAALICGSI, IALITMVIGFFSVGLVGMLIG, IFSQLAPAVTFGNILAIIGAL, IKLDAQQIGTGMLFAFALLMA, ILNKFFPNIHQYAFMIIIVFI, VIMTNLTHAVLAGIGLALIDL, WQFVVLCLTSVVVMGLASWFL, and FAQMANRLCGAIVLIFGGILI.

The protein belongs to the 2-hydroxycarboxylate transporter (2-HCT) (TC 2.A.24) family.

It is found in the cell membrane. The catalysed reaction is (S)-lactate(in) + (S)-malate(out) = (S)-lactate(out) + (S)-malate(in). It catalyses the reaction (R)-lactate(in) + (S)-malate(out) = (R)-lactate(out) + (S)-malate(in). It carries out the reaction glycolate(in) + (S)-malate(out) = glycolate(out) + (S)-malate(in). In terms of biological role, secondary transporter involved in malolactic fermentation. Catalyzes the uptake of divalent malate into the cell coupled to the exit of monovalent lactate, a product of malate degradation (precursor/product exchange). The malate/lactate exchange is electrogenic and results in the generation of a membrane potential. Is highly selective for the S-enantiomer of malate. In the absence of lactate, MleP can also catalyze the proton-dependent transport of malate. In vitro, transports a range of substrates that contain the 2-hydroxycarboxylate motif, HO-CR(2)-COO(-), with a preference for malate, lactate and glycolate. Modification of the OH or the COO(-) groups of the 2-hydroxycarboxylate motif drastically reduces the affinity of the transporter for the substrates, indicating their relevance in substrate recognition. Significant activity is also observed with some 2-oxocarboxylates. Transports only poorly citromalate. Citrate binds to MleP but is not translocated. In Lactococcus lactis subsp. lactis (strain IL1403) (Streptococcus lactis), this protein is Malate transporter MleP.